A 128-amino-acid polypeptide reads, in one-letter code: Azurin (128 aa).

One can recognise a Plastocyanin-like domain in the interval 1 to 128; the sequence is AECKVTVDST…SMMKGTVTLK (128 aa). Residues Cys3 and Cys26 are joined by a disulfide bond. 4 residues coordinate Cu cation: His46, Cys112, His117, and Met121.

It localises to the periplasm. In terms of biological role, transfers electrons from cytochrome c551 to cytochrome oxidase. In Pseudomonas putida (Arthrobacter siderocapsulatus), this protein is Azurin.